The following is a 1375-amino-acid chain: DNA-directed RNA polymerase subunit beta (1375 aa).

The protein belongs to the RNA polymerase beta chain family. The RNAP catalytic core consists of 2 alpha, 1 beta, 1 beta' and 1 omega subunit. When a sigma factor is associated with the core the holoenzyme is formed, which can initiate transcription.

It catalyses the reaction RNA(n) + a ribonucleoside 5'-triphosphate = RNA(n+1) + diphosphate. DNA-dependent RNA polymerase catalyzes the transcription of DNA into RNA using the four ribonucleoside triphosphates as substrates. The sequence is that of DNA-directed RNA polymerase subunit beta from Oleidesulfovibrio alaskensis (strain ATCC BAA-1058 / DSM 17464 / G20) (Desulfovibrio alaskensis).